The primary structure comprises 208 residues: Uracil phosphoribosyltransferase (208 aa).

5-phospho-alpha-D-ribose 1-diphosphate-binding positions include Arg78, Arg103, and 130-138 (DPMLATGGS). Uracil contacts are provided by residues Ile193 and 198-200 (GDA). A 5-phospho-alpha-D-ribose 1-diphosphate-binding site is contributed by Asp199.

The protein belongs to the UPRTase family. The cofactor is Mg(2+).

The catalysed reaction is UMP + diphosphate = 5-phospho-alpha-D-ribose 1-diphosphate + uracil. Its pathway is pyrimidine metabolism; UMP biosynthesis via salvage pathway; UMP from uracil: step 1/1. Its activity is regulated as follows. Allosterically activated by GTP. Catalyzes the conversion of uracil and 5-phospho-alpha-D-ribose 1-diphosphate (PRPP) to UMP and diphosphate. The polypeptide is Uracil phosphoribosyltransferase (Photobacterium profundum (strain SS9)).